Here is a 174-residue protein sequence, read N- to C-terminus: Large ribosomal subunit protein uL10 (174 aa).

This sequence belongs to the universal ribosomal protein uL10 family. As to quaternary structure, part of the ribosomal stalk of the 50S ribosomal subunit. The N-terminus interacts with L11 and the large rRNA to form the base of the stalk. The C-terminus forms an elongated spine to which L12 dimers bind in a sequential fashion forming a multimeric L10(L12)X complex.

Forms part of the ribosomal stalk, playing a central role in the interaction of the ribosome with GTP-bound translation factors. The polypeptide is Large ribosomal subunit protein uL10 (Geotalea uraniireducens (strain Rf4) (Geobacter uraniireducens)).